A 351-amino-acid chain; its full sequence is Phenylalanine--tRNA ligase alpha subunit (351 aa).

A disordered region spans residues 45 to 69; sequence LGDDAPIPAARRSLGSLPKDQRKDA. Glu-269 provides a ligand contact to Mg(2+).

Belongs to the class-II aminoacyl-tRNA synthetase family. Phe-tRNA synthetase alpha subunit type 1 subfamily. In terms of assembly, tetramer of two alpha and two beta subunits. Mg(2+) is required as a cofactor.

It is found in the cytoplasm. The enzyme catalyses tRNA(Phe) + L-phenylalanine + ATP = L-phenylalanyl-tRNA(Phe) + AMP + diphosphate + H(+). The polypeptide is Phenylalanine--tRNA ligase alpha subunit (Corynebacterium jeikeium (strain K411)).